A 525-amino-acid polypeptide reads, in one-letter code: GMP synthase [glutamine-hydrolyzing] (525 aa).

Residues 9-207 enclose the Glutamine amidotransferase type-1 domain; that stretch reads RILILDFGSQ…VLDVCQCEAL (199 aa). Catalysis depends on Cys86, which acts as the Nucleophile. Residues His181 and Glu183 contribute to the active site. The 193-residue stretch at 208-400 folds into the GMPS ATP-PPase domain; it reads WTPASIIEDT…LGLPYDMLNR (193 aa). 235–241 is an ATP binding site; that stretch reads SGGVDSS.

Homodimer.

The catalysed reaction is XMP + L-glutamine + ATP + H2O = GMP + L-glutamate + AMP + diphosphate + 2 H(+). It participates in purine metabolism; GMP biosynthesis; GMP from XMP (L-Gln route): step 1/1. Catalyzes the synthesis of GMP from XMP. The sequence is that of GMP synthase [glutamine-hydrolyzing] from Photorhabdus laumondii subsp. laumondii (strain DSM 15139 / CIP 105565 / TT01) (Photorhabdus luminescens subsp. laumondii).